A 290-amino-acid polypeptide reads, in one-letter code: Probable branched-chain-amino-acid aminotransferase (290 aa).

An N6-(pyridoxal phosphate)lysine modification is found at Lys-155.

Belongs to the class-IV pyridoxal-phosphate-dependent aminotransferase family. The cofactor is pyridoxal 5'-phosphate.

It carries out the reaction L-leucine + 2-oxoglutarate = 4-methyl-2-oxopentanoate + L-glutamate. The enzyme catalyses L-isoleucine + 2-oxoglutarate = (S)-3-methyl-2-oxopentanoate + L-glutamate. The catalysed reaction is L-valine + 2-oxoglutarate = 3-methyl-2-oxobutanoate + L-glutamate. It participates in amino-acid biosynthesis; L-isoleucine biosynthesis; L-isoleucine from 2-oxobutanoate: step 4/4. Its pathway is amino-acid biosynthesis; L-leucine biosynthesis; L-leucine from 3-methyl-2-oxobutanoate: step 4/4. It functions in the pathway amino-acid biosynthesis; L-valine biosynthesis; L-valine from pyruvate: step 4/4. Its function is as follows. Acts on leucine, isoleucine and valine. The chain is Probable branched-chain-amino-acid aminotransferase (ilvE) from Rickettsia felis (strain ATCC VR-1525 / URRWXCal2) (Rickettsia azadi).